The primary structure comprises 225 residues: Histone-arginine methyltransferase METTL23 (225 aa).

It belongs to the methyltransferase superfamily. METTL23 family. Interacts with HSPA5, HSP90B1, TUBULIN, UGGT1 and UGGT2. Interacts with TET3. Interacts with STPG4.

It localises to the nucleus. Its subcellular location is the cytoplasm. The catalysed reaction is L-arginyl-[protein] + 2 S-adenosyl-L-methionine = N(omega),N(omega)-dimethyl-L-arginyl-[protein] + 2 S-adenosyl-L-homocysteine + 2 H(+). Functionally, histone methyltransferase that dimethylates histone H3 at 'Arg-17', forming asymmetric dimethylarginine (H3R17me2a), leading to activate transcription via chromatin remodeling. Maternal factor involved in epigenetic chromatin reprogramming of the paternal genome in the zygote: mediates H3R17me2a, promoting histone H3.3 incorporation in the male pronucleus, leading to TET3 recruitment and subsequent DNA demethylation. This Rattus norvegicus (Rat) protein is Histone-arginine methyltransferase METTL23.